The primary structure comprises 213 residues: Pyridoxine/pyridoxamine 5'-phosphate oxidase (213 aa).

Residues 8–11 (RKNY) and K66 each bind substrate. FMN-binding positions include 61–66 (RIVLIK), 76–77 (FT), R82, K83, and Q105. Residues Y123, R127, and S131 each coordinate substrate. Residues 140–141 (QS) and W184 each bind FMN. Residue 190-192 (RLH) participates in substrate binding. Position 194 (R194) interacts with FMN.

The protein belongs to the pyridoxamine 5'-phosphate oxidase family. As to quaternary structure, homodimer. FMN serves as cofactor.

The enzyme catalyses pyridoxamine 5'-phosphate + O2 + H2O = pyridoxal 5'-phosphate + H2O2 + NH4(+). It catalyses the reaction pyridoxine 5'-phosphate + O2 = pyridoxal 5'-phosphate + H2O2. Its pathway is cofactor metabolism; pyridoxal 5'-phosphate salvage; pyridoxal 5'-phosphate from pyridoxamine 5'-phosphate: step 1/1. It functions in the pathway cofactor metabolism; pyridoxal 5'-phosphate salvage; pyridoxal 5'-phosphate from pyridoxine 5'-phosphate: step 1/1. In terms of biological role, catalyzes the oxidation of either pyridoxine 5'-phosphate (PNP) or pyridoxamine 5'-phosphate (PMP) into pyridoxal 5'-phosphate (PLP). This chain is Pyridoxine/pyridoxamine 5'-phosphate oxidase, found in Paraburkholderia phytofirmans (strain DSM 17436 / LMG 22146 / PsJN) (Burkholderia phytofirmans).